Here is a 329-residue protein sequence, read N- to C-terminus: Biotin synthase (329 aa).

Residues 38 to 262 form the Radical SAM core domain; the sequence is NTIQVSTLLS…IMPHSYIRLS (225 aa). Positions 53, 57, and 60 each coordinate [4Fe-4S] cluster. Residues C97, C128, C188, and R260 each coordinate [2Fe-2S] cluster.

It belongs to the radical SAM superfamily. Biotin synthase family. Homodimer. [4Fe-4S] cluster serves as cofactor. It depends on [2Fe-2S] cluster as a cofactor.

It catalyses the reaction (4R,5S)-dethiobiotin + (sulfur carrier)-SH + 2 reduced [2Fe-2S]-[ferredoxin] + 2 S-adenosyl-L-methionine = (sulfur carrier)-H + biotin + 2 5'-deoxyadenosine + 2 L-methionine + 2 oxidized [2Fe-2S]-[ferredoxin]. It participates in cofactor biosynthesis; biotin biosynthesis; biotin from 7,8-diaminononanoate: step 2/2. In terms of biological role, catalyzes the conversion of dethiobiotin (DTB) to biotin by the insertion of a sulfur atom into dethiobiotin via a radical-based mechanism. The chain is Biotin synthase from Acinetobacter baumannii (strain SDF).